We begin with the raw amino-acid sequence, 188 residues long: Elongation factor P (188 aa).

It belongs to the elongation factor P family.

The protein localises to the cytoplasm. The protein operates within protein biosynthesis; polypeptide chain elongation. Functionally, involved in peptide bond synthesis. Stimulates efficient translation and peptide-bond synthesis on native or reconstituted 70S ribosomes in vitro. Probably functions indirectly by altering the affinity of the ribosome for aminoacyl-tRNA, thus increasing their reactivity as acceptors for peptidyl transferase. This chain is Elongation factor P, found in Exiguobacterium sibiricum (strain DSM 17290 / CCUG 55495 / CIP 109462 / JCM 13490 / 255-15).